A 316-amino-acid chain; its full sequence is MTMYAKNNTAGKDMLSLLEWNKEELTDIIKLAVAMKTNPAHYSHILSGKILGMIFDKPSTRTRVSFEAGILQLGGQAIVMSSKELQIGRGEPIKDTAHVMSEYIDAIMIRTFSHEKVEELAYHAEIPIINGLTDLHHPCQALADLMTIYEWKDQLEGVKLAYIGDGNNVCHSLLLAGAMVGLDIRLAMPKGYEVDETILATAENLAKESGAKIFVTVDPKHAVADADFIYTDVWTSMGQEEENAKRLADFGEKYQVNAELASVAKPDYHFLHCLPAHREEEVTAEIIDGNHSVIYQQAGNRLHAQKALLAAILEAK.

Residues 59-62, Q86, R110, and 137-140 contribute to the carbamoyl phosphate site; these read STRT and HPCQ. L-ornithine is bound by residues N168, D232, and 236 to 237; that span reads SM. Residues 273-274 and R301 contribute to the carbamoyl phosphate site; that span reads CL.

It belongs to the aspartate/ornithine carbamoyltransferase superfamily. OTCase family.

The protein resides in the cytoplasm. It carries out the reaction carbamoyl phosphate + L-ornithine = L-citrulline + phosphate + H(+). It participates in amino-acid degradation; L-arginine degradation via ADI pathway; carbamoyl phosphate from L-arginine: step 2/2. Its function is as follows. Reversibly catalyzes the transfer of the carbamoyl group from carbamoyl phosphate (CP) to the N(epsilon) atom of ornithine (ORN) to produce L-citrulline. This is Ornithine carbamoyltransferase from Listeria monocytogenes serotype 4a (strain HCC23).